The sequence spans 142 residues: Neurofilament heavy polypeptide (142 aa).

In terms of domain architecture, IF rod spans 1-142 (MRGAVLRLGA…EAAKVNTDAM (142 aa)). The stretch at 26 to 74 (IAHVRQRLDDEARQRQEAEAAARALARFAQEAEAARVELQKKAQALQEE) forms a coiled coil.

Belongs to the intermediate filament family. As to quaternary structure, forms heterodimers with NEFL; which can further hetero-oligomerize (in vitro). Forms heterodimers with INA (in vitro). Post-translationally, there are a number of repeats of the tripeptide K-S-P, NFH is phosphorylated on a number of the serines in this motif. It is thought that phosphorylation of NFH results in the formation of interfilament cross bridges that are important in the maintenance of axonal caliber. Phosphorylation seems to play a major role in the functioning of the larger neurofilament polypeptides (NF-M and NF-H), the levels of phosphorylation being altered developmentally and coincidentally with a change in the neurofilament function. In terms of processing, phosphorylated in the head and rod regions by the PKC kinase PKN1, leading to the inhibition of polymerization.

The protein localises to the cytoplasm. It is found in the cytoskeleton. It localises to the cell projection. The protein resides in the axon. In terms of biological role, neurofilaments usually contain three intermediate filament proteins: NEFL, NEFM, and NEFH which are involved in the maintenance of neuronal caliber. NEFH has an important function in mature axons that is not subserved by the two smaller NF proteins. May additionally cooperate with the neuronal intermediate filament proteins PRPH and INA to form neuronal filamentous networks. The chain is Neurofilament heavy polypeptide (NEFH) from Sus scrofa (Pig).